The sequence spans 87 residues: Small ribosomal subunit protein bS20 (87 aa).

Residues 1–27 (MANSVQATKRARQAEKHRQHNAGMRAA) are disordered. Residues 9–20 (KRARQAEKHRQH) are compositionally biased toward basic residues.

This sequence belongs to the bacterial ribosomal protein bS20 family.

In terms of biological role, binds directly to 16S ribosomal RNA. In Hydrogenovibrio crunogenus (strain DSM 25203 / XCL-2) (Thiomicrospira crunogena), this protein is Small ribosomal subunit protein bS20.